Here is a 326-residue protein sequence, read N- to C-terminus: MATH domain and coiled-coil domain-containing protein At3g58370 (326 aa).

Positions 7–133 constitute an MATH domain; that stretch reads DNKFTWVIKN…NGEVKIVVEI (127 aa). The stretch at 259–312 forms a coiled coil; the sequence is LRLDWLEKKLAEVKAKKKKVETGKARLQRAEEELQKLNQKCLELKAFLEKENAD.

In Arabidopsis thaliana (Mouse-ear cress), this protein is MATH domain and coiled-coil domain-containing protein At3g58370.